The following is a 917-amino-acid chain: Gamma-tubulin complex component 3 (917 aa).

It belongs to the TUBGCP family. Gamma-tubulin small complex (Gamma TuSC) is a heterotetrameric complex which contains two molecules of gamma-tubulin, and one molecule each of Dgrip84 and Dgrip91. The gamma-tubulin in this complex binds preferentially to GDP over GTP.

It is found in the cytoplasm. Its subcellular location is the cytoskeleton. The protein resides in the microtubule organizing center. It localises to the centrosome. The protein localises to the perinuclear region. In Drosophila melanogaster (Fruit fly), this protein is Gamma-tubulin complex component 3.